The sequence spans 508 residues: ATP synthase subunit alpha, mitochondrial (508 aa).

ATP is bound at residue 171 to 178; that stretch reads GDRQTGKT.

This sequence belongs to the ATPase alpha/beta chains family. As to quaternary structure, F-type ATPases have 2 components, CF(1) - the catalytic core - and CF(0) - the membrane proton channel. CF(1) has five subunits: alpha(3), beta(3), gamma(1), delta(1), epsilon(1). CF(0) has three main subunits: a, b and c.

The protein resides in the mitochondrion. It localises to the mitochondrion inner membrane. Mitochondrial membrane ATP synthase (F(1)F(0) ATP synthase or Complex V) produces ATP from ADP in the presence of a proton gradient across the membrane which is generated by electron transport complexes of the respiratory chain. F-type ATPases consist of two structural domains, F(1) - containing the extramembraneous catalytic core, and F(0) - containing the membrane proton channel, linked together by a central stalk and a peripheral stalk. During catalysis, ATP synthesis in the catalytic domain of F(1) is coupled via a rotary mechanism of the central stalk subunits to proton translocation. Subunits alpha and beta form the catalytic core in F(1). Rotation of the central stalk against the surrounding alpha(3)beta(3) subunits leads to hydrolysis of ATP in three separate catalytic sites on the beta subunits. Subunit alpha does not bear the catalytic high-affinity ATP-binding sites. This Zea mays (Maize) protein is ATP synthase subunit alpha, mitochondrial (ATPA).